A 288-amino-acid polypeptide reads, in one-letter code: Oxaloacetate decarboxylase (288 aa).

Residue Ser47 coordinates substrate. Asp85 contacts Mg(2+). Substrate contacts are provided by Arg156 and His232.

The protein belongs to the isocitrate lyase/PEP mutase superfamily. Oxaloacetate decarboxylase family. Homotetramer; dimer of dimers. Mg(2+) serves as cofactor.

It carries out the reaction oxaloacetate + H(+) = pyruvate + CO2. Its function is as follows. Catalyzes the decarboxylation of oxaloacetate into pyruvate. Seems to play a role in maintaining cellular concentrations of bicarbonate and pyruvate. The sequence is that of Oxaloacetate decarboxylase from Rhodopseudomonas palustris (strain BisB18).